A 139-amino-acid chain; its full sequence is Small ribosomal subunit protein uS12 (139 aa).

A disordered region spans residues 1–21 (MSTVSQLIKKRRSSKTSKTKA). The segment covering 8–18 (IKKRRSSKTSK) has biased composition (basic residues). A 3-methylthioaspartic acid modification is found at aspartate 102.

This sequence belongs to the universal ribosomal protein uS12 family. Part of the 30S ribosomal subunit. Contacts proteins S8 and S17. May interact with IF1 in the 30S initiation complex.

Functionally, with S4 and S5 plays an important role in translational accuracy. In terms of biological role, interacts with and stabilizes bases of the 16S rRNA that are involved in tRNA selection in the A site and with the mRNA backbone. Located at the interface of the 30S and 50S subunits, it traverses the body of the 30S subunit contacting proteins on the other side and probably holding the rRNA structure together. The combined cluster of proteins S8, S12 and S17 appears to hold together the shoulder and platform of the 30S subunit. The chain is Small ribosomal subunit protein uS12 from Aster yellows witches'-broom phytoplasma (strain AYWB).